We begin with the raw amino-acid sequence, 527 residues long: Amino acid transporter heavy chain SLC3A2 (527 aa).

Positions 1-31 are disordered; sequence MSQDTEVDMKDVELNELEPEKQPMNAADGAA. Topologically, residues 1 to 75 are cytoplasmic; that stretch reads MSQDTEVDMK…AGSPGWVRTR (75 aa). The residue at position 2 (Ser-2) is a Phosphoserine. Thr-5 is modified (phosphothreonine). Positions 7-21 are enriched in basic and acidic residues; sequence VDMKDVELNELEPEK. Lys-42 is covalently cross-linked (Glycyl lysine isopeptide (Lys-Gly) (interchain with G-Cter in ubiquitin)). Ser-58 is modified (phosphoserine). Lys-59 is covalently cross-linked (Glycyl lysine isopeptide (Lys-Gly) (interchain with G-Cter in SUMO2)). Residues 76 to 98 traverse the membrane as a helical; Signal-anchor for type II membrane protein segment; it reads WALLLLFWLGWLGMLAGAVVIIV. The Extracellular portion of the chain corresponds to 99-527; it reads RAPRCRELPV…GLLLQFPFVA (429 aa). N-linked (GlcNAc...) asparagine glycosylation is found at Asn-166, Asn-249, Asn-259, and Asn-263. The residue at position 300 (Ser-300) is a Phosphoserine. N-linked (GlcNAc...) asparagine glycans are attached at residues Asn-318, Asn-386, and Asn-400. Position 421 is a phosphoserine (Ser-421). An N-linked (GlcNAc...) asparagine glycan is attached at Asn-510.

The protein belongs to the SLC3A transporter family. Disulfide-linked heterodimer with a non-glycosylated light chain (SLC7A5, SLC7A6, SLC7A7, SLC7A8, SLC7A10 or SLC7A11). Interacts with TLCD3A/CT120 and ICAM1. Constitutively and specifically associates with beta-1 integrins (alpha-2/beta-1, alpha-3/beta-1, alpha-5/beta-1 and alpha-6/beta-1), but minimally with alpha-4/beta-1. Interacts with LAPTM4B; recruits SLC3A2 and SLC7A5 to lysosomes to promote leucine uptake into these organelles and is required for mTORC1 activation. In terms of processing, phosphorylation on Ser-300 and on Ser-421 by ecto-protein kinases favors heterotypic cell-cell interactions. N-glycosylated; N-glycosylation is crucial for trafficking and stability of SLC3A2 to the plasma membrane. As to expression, in brain expressed on capillary endothelia in cerebral cortex (at protein level). Highest expression in kidney, jejunum, ileum, colon, placenta, testis and spleen. Lower levels found in liver, lung and brain with weakest expression in heart. Expressed in retina, inner blood-retinal barrier of retina, retinal vascular endothelial cells. Also expressed in C6 glioma cells and in the retinal capillary endothelial cell line TR-iBRB2.

The protein localises to the apical cell membrane. It is found in the cell membrane. The protein resides in the cell junction. It localises to the lysosome membrane. Its subcellular location is the melanosome. The protein localises to the basolateral cell membrane. In terms of biological role, acts as a chaperone that facilitates biogenesis and trafficking of functional transporters heterodimers to the plasma membrane. Forms heterodimer with SLC7 family transporters (SLC7A5, SLC7A6, SLC7A7, SLC7A8, SLC7A10 and SLC7A11), a group of amino-acid antiporters. Heterodimers function as amino acids exchangers, the specificity of the substrate depending on the SLC7A subunit. Heterodimers formed by SLC3A2/SLC7A6 or SLC3A2/SLC7A7 mediate the uptake of dibasic amino acids. Heterodimer SLC3A2/SLC7A11 functions as an antiporter by mediating the exchange of extracellular anionic L-cystine and intracellular L-glutamate across the cellular plasma membrane. SLC3A2/SLC7A10 translocates small neutral L- and D-amino acids across the plasma membrane. SLC3A2/SLC75 or SLC3A2/SLC7A8 translocates neutral amino acids with broad specificity, thyroid hormones and L-DOPA. SLC3A2 is essential for plasma membrane localization, stability, and the transport activity of SLC7A5 and SLC7A8. When associated with LAPTM4B, the heterodimer SLC7A5 is recruited to lysosomes to promote leucine uptake into these organelles, and thereby mediates mTORC1 activation. Modulates integrin-related signaling and is essential for integrin-dependent cell spreading, migration and tumor progression. The polypeptide is Amino acid transporter heavy chain SLC3A2 (Rattus norvegicus (Rat)).